The following is a 248-amino-acid chain: 3-deoxy-manno-octulosonate cytidylyltransferase (248 aa).

This sequence belongs to the KdsB family.

The protein resides in the cytoplasm. The catalysed reaction is 3-deoxy-alpha-D-manno-oct-2-ulosonate + CTP = CMP-3-deoxy-beta-D-manno-octulosonate + diphosphate. The protein operates within nucleotide-sugar biosynthesis; CMP-3-deoxy-D-manno-octulosonate biosynthesis; CMP-3-deoxy-D-manno-octulosonate from 3-deoxy-D-manno-octulosonate and CTP: step 1/1. It functions in the pathway bacterial outer membrane biogenesis; lipopolysaccharide biosynthesis. Its function is as follows. Activates KDO (a required 8-carbon sugar) for incorporation into bacterial lipopolysaccharide in Gram-negative bacteria. The sequence is that of 3-deoxy-manno-octulosonate cytidylyltransferase from Cronobacter sakazakii (strain ATCC BAA-894) (Enterobacter sakazakii).